Consider the following 422-residue polypeptide: NADH-quinone oxidoreductase subunit F (422 aa).

The interval 1-26 (MLKEEDKIFTNLHGQQSHDLKSSKKR) is disordered. Residues 16–26 (QSHDLKSSKKR) show a composition bias toward basic and acidic residues. Residue 54 to 63 (GRGGAGFSTG) participates in NAD(+) binding. 166–213 (GAGAYICGEETALLESLEGKKGMPRLKPPFPAGFGLYGCPTTINNVES) is a binding site for FMN. 4 residues coordinate [4Fe-4S] cluster: Cys-344, Cys-347, Cys-350, and Cys-390.

This sequence belongs to the complex I 51 kDa subunit family. It depends on FMN as a cofactor. [4Fe-4S] cluster is required as a cofactor.

The catalysed reaction is a quinone + NADH + 5 H(+)(in) = a quinol + NAD(+) + 4 H(+)(out). Its function is as follows. NDH-1 shuttles electrons from NADH, via FMN and iron-sulfur (Fe-S) centers, to quinones in the respiratory chain. Couples the redox reaction to proton translocation (for every two electrons transferred, four hydrogen ions are translocated across the cytoplasmic membrane), and thus conserves the redox energy in a proton gradient. This chain is NADH-quinone oxidoreductase subunit F (nuoF), found in Rickettsia felis (strain ATCC VR-1525 / URRWXCal2) (Rickettsia azadi).